Consider the following 326-residue polypeptide: Aldo-keto reductase family 1 member D1 (326 aa).

NADP(+)-binding positions include 22 to 26 (GLGTY) and Asp-53. Position 26 (Tyr-26) interacts with substrate. Substrate-binding residues include Tyr-58, Trp-89, Glu-120, and Tyr-132. The active-site Proton donor is the Tyr-58. NADP(+) is bound by residues 169 to 170 (SN), Gln-193, and 219 to 224 (YSPLGT). Residue Trp-230 coordinates substrate. 273–283 (KSFNPERIKEN) is a binding site for NADP(+).

The protein belongs to the aldo/keto reductase family.

The protein resides in the cytoplasm. The catalysed reaction is 5beta-cholestan-3-one + NADP(+) = cholest-4-en-3-one + NADPH + H(+). It carries out the reaction 4,5beta-dihydrocortisone + NADP(+) = cortisone + NADPH + H(+). The enzyme catalyses cortisol + NADPH + H(+) = 5beta-dihydrocortisol + NADP(+). It catalyses the reaction corticosterone + NADPH + H(+) = 5beta-dihydrocorticosterone + NADP(+). The catalysed reaction is 7alpha,12alpha-dihydroxycholest-4-en-3-one + NADPH + H(+) = 7alpha,12alpha-dihydroxy-5beta-cholestan-3-one + NADP(+). It carries out the reaction 7alpha-hydroxycholest-4-en-3-one + NADPH + H(+) = 7alpha-hydroxy-5beta-cholestan-3-one + NADP(+). The enzyme catalyses epitestosterone + NADPH + H(+) = 5beta-dihydroepitestosterone + NADP(+). It catalyses the reaction androst-4-ene-3,17-dione + NADPH + H(+) = 5beta-androstane-3,17-dione + NADP(+). The catalysed reaction is progesterone + NADPH + H(+) = 5beta-pregnan-3,20-dione + NADP(+). It carries out the reaction 21-hydroxyprogesterone + NADPH + H(+) = 5beta-dihydrodeoxycorticosterone + NADP(+). The enzyme catalyses aldosterone + NADPH + H(+) = 5beta-dihydroaldosterone + NADP(+). It catalyses the reaction 17beta-hydroxyandrosta-1,4-dien-3-one + NADPH + H(+) = 17beta-hydroxy-5beta-androst-1-en-3-one + NADP(+). The catalysed reaction is 17beta-hydroxyestr-4-en-3-one + NADPH + H(+) = 17beta-hydroxy-5beta-estran-3-one + NADP(+). It carries out the reaction 5beta-dihydrotestosterone + NADP(+) = testosterone + NADPH + H(+). The enzyme catalyses androst-4-ene-3,11,17-trione + NADPH + H(+) = 17beta-hydroxyandrost-4-ene-3,11-dione + NADP(+). Subject to inhibition by high substrate concentrations. Inhibited by testosterone concentrations above 10 uM. Inhibited by the primary and secondary bile acids chenodeoxycholic acid and ursodeoxycholic acid. Functionally, catalyzes the stereospecific NADPH-dependent reduction of the C4-C5 double bond of bile acid intermediates and steroid hormones carrying a delta(4)-3-one structure to yield an A/B cis-ring junction. This cis-configuration is crucial for bile acid biosynthesis and plays important roles in steroid metabolism. Capable of reducing a broad range of delta-(4)-3-ketosteroids from C18 (such as, 17beta-hydroxyestr-4-en-3-one) to C27 (such as, 7alpha-hydroxycholest-4-en-3-one). This Oryctolagus cuniculus (Rabbit) protein is Aldo-keto reductase family 1 member D1 (AKR1D1).